Here is a 306-residue protein sequence, read N- to C-terminus: UDP-N-acetylenolpyruvoylglucosamine reductase (306 aa).

The FAD-binding PCMH-type domain occupies 34–198; it reads VGGPADLLIT…LEVTFKLHNS (165 aa). The active site involves arginine 177. Serine 227 functions as the Proton donor in the catalytic mechanism. The active site involves glutamate 297.

This sequence belongs to the MurB family. Requires FAD as cofactor.

It localises to the cytoplasm. The enzyme catalyses UDP-N-acetyl-alpha-D-muramate + NADP(+) = UDP-N-acetyl-3-O-(1-carboxyvinyl)-alpha-D-glucosamine + NADPH + H(+). Its pathway is cell wall biogenesis; peptidoglycan biosynthesis. Cell wall formation. In Clostridium botulinum (strain ATCC 19397 / Type A), this protein is UDP-N-acetylenolpyruvoylglucosamine reductase.